The following is a 446-amino-acid chain: Serum factor response D (446 aa).

Residues 1 to 61 (MGRKKIKIQR…PNAKEKYFQY (61 aa)) form the MADS-box domain. 3 disordered regions span residues 95–195 (KKEK…FNSS), 210–296 (TQEN…CQQV), and 319–432 (CSSP…SNLN). The span at 112 to 121 (SHSEEEDHKS) shows a compositional bias: basic and acidic residues. Residues 133 to 142 (HHNHHHHHHQ) show a composition bias toward basic residues. Low complexity-rich tracts occupy residues 143-195 (YNNN…FNSS) and 216-282 (HYNN…NNNN). Residues 322–355 (PEDTSPMTSPRTPPFSSTNTNTLQTSPNSQQKSK) show a composition bias toward polar residues. Residues 365-432 (NNNQNNNNQN…SPTSSSSNLN (68 aa)) are compositionally biased toward low complexity.

The protein localises to the nucleus. This is Serum factor response D (srfD) from Dictyostelium discoideum (Social amoeba).